The sequence spans 246 residues: Sensory transduction protein LytT (246 aa).

Positions 4–120 (HIMIAEDERL…RFKIAMNRIR (117 aa)) constitute a Response regulatory domain. 4-aspartylphosphate is present on aspartate 55. The HTH LytTR-type domain maps to 136 to 243 (LVVNLDEKMM…AKGLFDALQG (108 aa)).

Phosphorylated by LytS.

The protein localises to the cytoplasm. Functionally, member of the two-component regulatory system LytS/LytT that probably regulates genes involved in cell wall metabolism. The protein is Sensory transduction protein LytT (lytT) of Oceanobacillus iheyensis (strain DSM 14371 / CIP 107618 / JCM 11309 / KCTC 3954 / HTE831).